We begin with the raw amino-acid sequence, 513 residues long: Quiannulatic acid synthase (513 aa).

Residues 14–34 traverse the membrane as a helical segment; sequence VFTFCNIILALASLVVAQCVY. Residue Asn308 is glycosylated (N-linked (GlcNAc...) asparagine). A heme-binding site is contributed by Cys477.

It belongs to the cytochrome P450 family. Requires heme as cofactor.

The protein resides in the membrane. The enzyme catalyses quiannulatene + 3 reduced [NADPH--hemoprotein reductase] + 3 O2 = quiannulatate + 3 oxidized [NADPH--hemoprotein reductase] + 4 H2O + 4 H(+). The protein operates within secondary metabolite biosynthesis; terpenoid biosynthesis. Its function is as follows. Cytochrome P450 monooxygenase; part of the gene cluster that mediates the biosynthesis of the pentacyclic sesterterpene quiannulatic acid. The first step of the pathway is performed by the sesterterpene synthase (QS) that possesses both prenyl transferase and terpene cyclase activity, converting isopentenyl diphosphate and dimethylallyl diphosphate into geranylfarnesyl diphosphate (GFPP) and further converting GFPP into quiannulatene via an unprecedented cyclization mode which involves three rounds of hydride shifts and two successive C-C bond migrations to construct the 5-6-5-5-5 fused ring. The cytochrome P450 monooxygenase Qnn-P450 then oxidizes quiannulatene at C-19 in 3 successive reactions to afford quiannulatic acid. In Emericella variicolor (Aspergillus stellatus), this protein is Quiannulatic acid synthase.